We begin with the raw amino-acid sequence, 350 residues long: 3-isopropylmalate dehydrogenase (350 aa).

76–87 contributes to the NAD(+) binding site; it reads GPKWDNAPKRPE. The substrate site is built by arginine 94, arginine 104, arginine 132, and aspartate 217. Aspartate 217, aspartate 241, and aspartate 245 together coordinate Mg(2+). NAD(+) is bound at residue 275–287; it reads GSAPDIANQNIAN.

Belongs to the isocitrate and isopropylmalate dehydrogenases family. LeuB type 1 subfamily. In terms of assembly, homodimer. Mg(2+) is required as a cofactor. Mn(2+) serves as cofactor.

It localises to the cytoplasm. The enzyme catalyses (2R,3S)-3-isopropylmalate + NAD(+) = 4-methyl-2-oxopentanoate + CO2 + NADH. The protein operates within amino-acid biosynthesis; L-leucine biosynthesis; L-leucine from 3-methyl-2-oxobutanoate: step 3/4. Functionally, catalyzes the oxidation of 3-carboxy-2-hydroxy-4-methylpentanoate (3-isopropylmalate) to 3-carboxy-4-methyl-2-oxopentanoate. The product decarboxylates to 4-methyl-2 oxopentanoate. The sequence is that of 3-isopropylmalate dehydrogenase from Listeria innocua serovar 6a (strain ATCC BAA-680 / CLIP 11262).